Consider the following 433-residue polypeptide: Glutamate-rich protein 2 (433 aa).

Disordered regions lie at residues 56–86 (VPAA…LAPP), 113–161 (DSAS…KHPQ), 189–273 (SRQN…SIET), 308–344 (CLED…TRAP), and 394–433 (EKAQ…EDGS). Pro residues predominate over residues 63–85 (PAPPPPRALRPAPGPPRSAPLAP). Residues 114–127 (SASQARGSEPSSSA) show a composition bias toward polar residues. Basic and acidic residues-rich tracts occupy residues 199 to 214 (DPKE…EKPQ) and 244 to 258 (ARKE…DKVS). The segment covering 259 to 273 (LKSSENRPSSRSIET) has biased composition (polar residues). Composition is skewed to acidic residues over residues 308–334 (CLED…EDDE) and 397–433 (QEEE…EDGS).

The polypeptide is Glutamate-rich protein 2 (Erich2) (Rattus norvegicus (Rat)).